A 222-amino-acid polypeptide reads, in one-letter code: Cyclin-U2-1 (222 aa).

This sequence belongs to the cyclin family. Cyclin U/P subfamily. As to quaternary structure, interacts with CDKA-1. Expressed in roots, stems and flowers. Expressed in the shoot apex, leaf primordia and young leaves.

This chain is Cyclin-U2-1 (CYCU2-1), found in Arabidopsis thaliana (Mouse-ear cress).